Reading from the N-terminus, the 230-residue chain is UPF0494 membrane protein PB2B2.14c (230 aa).

3 helical membrane-spanning segments follow: residues 78–98, 120–140, and 148–168; these read WPLL…NFEV, IWGP…GLIY, and AIPL…VAMV.

It belongs to the UPF0494 family.

The protein resides in the membrane. The polypeptide is UPF0494 membrane protein PB2B2.14c (Schizosaccharomyces pombe (strain 972 / ATCC 24843) (Fission yeast)).